A 492-amino-acid polypeptide reads, in one-letter code: Asparagine--tRNA ligase, mitochondrial (492 aa).

It belongs to the class-II aminoacyl-tRNA synthetase family.

The protein localises to the mitochondrion matrix. The enzyme catalyses tRNA(Asn) + L-asparagine + ATP = L-asparaginyl-tRNA(Asn) + AMP + diphosphate + H(+). Catalyzes the attachment of asparagine to tRNA(Asn) in the mitochondrion. This Saccharomyces cerevisiae (strain ATCC 204508 / S288c) (Baker's yeast) protein is Asparagine--tRNA ligase, mitochondrial (SLM5).